The following is a 532-amino-acid chain: ATP synthase subunit alpha (532 aa).

171-178 provides a ligand contact to ATP; it reads GDRQTGKT.

It belongs to the ATPase alpha/beta chains family. As to quaternary structure, F-type ATPases have 2 components, CF(1) - the catalytic core - and CF(0) - the membrane proton channel. CF(1) has five subunits: alpha(3), beta(3), gamma(1), delta(1), epsilon(1). CF(0) has three main subunits: a(1), b(2) and c(9-12). The alpha and beta chains form an alternating ring which encloses part of the gamma chain. CF(1) is attached to CF(0) by a central stalk formed by the gamma and epsilon chains, while a peripheral stalk is formed by the delta and b chains.

It is found in the cell membrane. The catalysed reaction is ATP + H2O + 4 H(+)(in) = ADP + phosphate + 5 H(+)(out). Functionally, produces ATP from ADP in the presence of a proton gradient across the membrane. The alpha chain is a regulatory subunit. This Amoebophilus asiaticus (strain 5a2) protein is ATP synthase subunit alpha.